The following is a 401-amino-acid chain: S-adenosylmethionine synthase (401 aa).

136 to 141 (GTGSSD) contributes to the ATP binding site. The tract at residues 278-305 (GDDGSVGRGNRSNGLITPSRPMSMEATS) is disordered.

This sequence belongs to the AdoMet synthase 2 family. It depends on Mg(2+) as a cofactor.

It catalyses the reaction L-methionine + ATP + H2O = S-adenosyl-L-methionine + phosphate + diphosphate. Its pathway is amino-acid biosynthesis; S-adenosyl-L-methionine biosynthesis; S-adenosyl-L-methionine from L-methionine: step 1/1. Catalyzes the formation of S-adenosylmethionine from methionine and ATP. This Methanococcoides burtonii (strain DSM 6242 / NBRC 107633 / OCM 468 / ACE-M) protein is S-adenosylmethionine synthase.